The chain runs to 280 residues: Fe-S cluster assembly protein DRE2 (280 aa).

An N-terminal SAM-like domain region spans residues 1–121 (MSNLLVFDNS…TTLLKKSGGG (121 aa)). The linker stretch occupies residues 122 to 176 (PKKFAFKRASPATAAPSTNGTNPAATVNLNSVVTLSMDDDDLMDEDDLMEDDTNL). [2Fe-2S] cluster-binding residues include cysteine 186, cysteine 198, cysteine 201, and cysteine 203. The fe-S binding site A stretch occupies residues 186 to 203 (CDPGPGKKRRKACKDCTC). [4Fe-4S] cluster-binding residues include cysteine 244, cysteine 247, cysteine 255, and cysteine 258. 2 short sequence motifs (cx2C motif) span residues 244–247 (CGSC) and 255–258 (CDGC). Residues 244–258 (CGSCALGDAFRCDGC) are fe-S binding site B.

Belongs to the anamorsin family. Monomer. Interacts with TAH18. Interacts with MIA40. [2Fe-2S] cluster is required as a cofactor. Requires [4Fe-4S] cluster as cofactor.

Its subcellular location is the cytoplasm. The protein localises to the mitochondrion intermembrane space. In terms of biological role, component of the cytosolic iron-sulfur (Fe-S) protein assembly (CIA) machinery required for the maturation of extramitochondrial Fe-S proteins. Part of an electron transfer chain functioning in an early step of cytosolic Fe-S biogenesis, facilitating the de novo assembly of a [4Fe-4S] cluster on the scaffold complex CFD1-NBP35. Electrons are transferred to DRE2 from NADPH via the FAD- and FMN-containing protein TAH18. TAH18-DRE2 are also required for the assembly of the diferric tyrosyl radical cofactor of ribonucleotide reductase (RNR), probably by providing electrons for reduction during radical cofactor maturation in the catalytic small subunit RNR2. The protein is Fe-S cluster assembly protein DRE2 of Yarrowia lipolytica (strain CLIB 122 / E 150) (Yeast).